The sequence spans 395 residues: Chalcone synthase 3 (395 aa).

An N-acetylvaline modification is found at valine 2. Cysteine 169 is an active-site residue.

This sequence belongs to the thiolase-like superfamily. Chalcone/stilbene synthases family.

The enzyme catalyses (E)-4-coumaroyl-CoA + 3 malonyl-CoA + 3 H(+) = 2',4,4',6'-tetrahydroxychalcone + 3 CO2 + 4 CoA. It functions in the pathway secondary metabolite biosynthesis; flavonoid biosynthesis. Its function is as follows. The primary product of this enzyme is 4,2',4',6'-tetrahydroxychalcone (also termed naringenin-chalcone or chalcone) which can under specific conditions spontaneously isomerize into naringenin. In Sinapis alba (White mustard), this protein is Chalcone synthase 3 (CHS3).